The primary structure comprises 510 residues: Ankyrin repeat domain-containing protein 13C-A (510 aa).

Residues 1-19 (MTGEKIRSLHKDQKPSKDE) are compositionally biased toward basic and acidic residues. The interval 1–35 (MTGEKIRSLHKDQKPSKDEDLLEPDEEATAGGTFT) is disordered. ANK repeat units lie at residues 80 to 111 (DVYFPVHECVLKGDIRRLSSLIRSHSIGQKDS), 112 to 141 (HGNTPLHLAVMLGNKECAHLLLAHNAPVKV), and 145 to 174 (QGWSPLAEAISYGDRQMITALLRKLKQQSR).

It is found in the endoplasmic reticulum membrane. Acts as a molecular chaperone for G protein-coupled receptors, regulating their biogenesis and exit from the ER. The protein is Ankyrin repeat domain-containing protein 13C-A (ankrd13c-a) of Xenopus laevis (African clawed frog).